The primary structure comprises 65 residues: Large ribosomal subunit protein uL29 (65 aa).

Belongs to the universal ribosomal protein uL29 family.

This is Large ribosomal subunit protein uL29 from Desulforapulum autotrophicum (strain ATCC 43914 / DSM 3382 / VKM B-1955 / HRM2) (Desulfobacterium autotrophicum).